Consider the following 527-residue polypeptide: DUF21 domain-containing protein At1g47330 (527 aa).

Over 1–15 the chain is Extracellular; the sequence is MSSDIPCCGTTFSLY. The 184-residue stretch at 8–191 folds into the CNNM transmembrane domain; sequence CGTTFSLYVV…GKGGDLTTDE (184 aa). Residues 16–36 form a helical membrane-spanning segment; sequence VVIIIALVAFAGLMAGLTLGL. The Cytoplasmic segment spans residues 37-70; sequence MSLGLVDLEVLIKSGRPQDRINAGKIFPVVKNQH. Residues 71-91 traverse the membrane as a helical segment; sequence LLLCTLLIGNSMAMEALPIFL. Residues 92-93 are Extracellular-facing; the sequence is DK. Residues 94-114 traverse the membrane as a helical segment; that stretch reads IVPPWLAILLSVTLILVFGEI. Residues 115-126 are Cytoplasmic-facing; the sequence is MPQAVCTRYGLK. Residues 127–147 form a helical membrane-spanning segment; it reads VGAIMAPFVRVLLVLFFPISY. Residues 148 to 527 are Extracellular-facing; it reads PISKVLDWML…PKHEESTQTL (380 aa). 3 CBS domains span residues 210 to 271, 274 to 334, and 366 to 435; these read MTPI…EVPL, MSMR…TKDE, and KSEN…ILDE. Disordered regions lie at residues 307-335, 358-384, and 464-527; these read KDLD…KDEL, ETGD…LLAA, and ITQS…TQTL. S315 carries the phosphoserine modification. Positions 358–369 are enriched in basic and acidic residues; that stretch reads ETGDAKSGKSEN. The span at 464-501 shows a compositional bias: low complexity; the sequence is ITQSSSGSTSPNQTSHMATPDSSPTTKPSNSSPTRKPS. N-linked (GlcNAc...) asparagine glycosylation is present at N475. Residues 502 to 515 are compositionally biased toward polar residues; the sequence is VSSPTREPSDSSHS. Over residues 518–527 the composition is skewed to basic and acidic residues; the sequence is PKHEESTQTL.

The protein localises to the membrane. This Arabidopsis thaliana (Mouse-ear cress) protein is DUF21 domain-containing protein At1g47330 (CBSDUF7).